Consider the following 612-residue polypeptide: Sulfite reductase [NADPH] hemoprotein beta-component (612 aa).

Residues 1 to 26 (MDDHKPIETPDGPAVDTPGIGARRYE) form a disordered region. [4Fe-4S] cluster is bound by residues C469, C475, C514, and C518. Residue C518 participates in siroheme binding.

This sequence belongs to the nitrite and sulfite reductase 4Fe-4S domain family. Alpha(8)-beta(8). The alpha component is a flavoprotein, the beta component is a hemoprotein. Siroheme is required as a cofactor. Requires [4Fe-4S] cluster as cofactor.

The catalysed reaction is hydrogen sulfide + 3 NADP(+) + 3 H2O = sulfite + 3 NADPH + 4 H(+). It participates in sulfur metabolism; hydrogen sulfide biosynthesis; hydrogen sulfide from sulfite (NADPH route): step 1/1. Functionally, component of the sulfite reductase complex that catalyzes the 6-electron reduction of sulfite to sulfide. This is one of several activities required for the biosynthesis of L-cysteine from sulfate. This Methylorubrum extorquens (strain PA1) (Methylobacterium extorquens) protein is Sulfite reductase [NADPH] hemoprotein beta-component.